Consider the following 369-residue polypeptide: Deacetylase EF_0837 (369 aa).

The Zn(2+) site is built by His58, His60, Lys152, His186, His209, and Asp270. N6-carboxylysine is present on Lys152.

The protein belongs to the metallo-dependent hydrolases superfamily. Atu3266/EF_0837 deacetylase family. Zn(2+) is required as a cofactor.

Its function is as follows. Esterase that can catalyze the deacetylation of acetyl-(R)-mandelate, but with very low efficiency (in vitro). The polypeptide is Deacetylase EF_0837 (Enterococcus faecalis (strain ATCC 700802 / V583)).